A 226-amino-acid chain; its full sequence is Ribose-5-phosphate isomerase A (226 aa).

Substrate contacts are provided by residues 33–36 (TGST), 86–89 (DGAD), and 99–102 (KGGG). The active-site Proton acceptor is the E108. K126 lines the substrate pocket.

The protein belongs to the ribose 5-phosphate isomerase family. As to quaternary structure, homodimer.

The enzyme catalyses aldehydo-D-ribose 5-phosphate = D-ribulose 5-phosphate. The protein operates within carbohydrate degradation; pentose phosphate pathway; D-ribose 5-phosphate from D-ribulose 5-phosphate (non-oxidative stage): step 1/1. Functionally, catalyzes the reversible conversion of ribose-5-phosphate to ribulose 5-phosphate. This is Ribose-5-phosphate isomerase A from Bordetella pertussis (strain Tohama I / ATCC BAA-589 / NCTC 13251).